The primary structure comprises 1733 residues: DNA-directed RNA polymerase II subunit RPB1 (1733 aa).

Zn(2+)-binding residues include Cys67, Cys70, Cys77, His80, Cys107, Cys110, Cys148, and Cys167. The interval 248–260 is lid loop; it reads PSISFNESQRGED. The interval 306–323 is rudder loop; it reads NDIAGQPQALQKSGRPVK. Asp481, Asp483, and Asp485 together coordinate Mg(2+). A Glycyl lysine isopeptide (Lys-Gly) (interchain with G-Cter in ubiquitin) cross-link involves residue Lys695. The interval 810–822 is bridging helix; sequence PQEFFFHAMGGRE. Residues Lys1246 and Lys1350 each participate in a glycyl lysine isopeptide (Lys-Gly) (interchain with G-Cter in ubiquitin) cross-link. Thr1471 is modified (phosphothreonine). Residues 1537 to 1733 are disordered; it reads VSSPGFSPTS…QKHNENENSR (197 aa). The segment covering 1538–1719 has biased composition (low complexity); that stretch reads SSPGFSPTSP…YSPGSPAYSP (182 aa). A run of 23 repeats spans residues 1549-1555, 1556-1562, 1563-1569, 1570-1576, 1577-1583, 1584-1590, 1591-1597, 1598-1604, 1605-1611, 1612-1618, 1619-1625, 1626-1632, 1633-1639, 1640-1646, 1647-1653, 1654-1660, 1661-1667, 1668-1674, 1675-1681, 1682-1688, 1689-1695, 1696-1702, and 1703-1709. Positions 1549–1716 are C-terminal domain (CTD); 24 X 7 AA approximate tandem repeats of Y-S-P-T-S-P-[A-S-N-G]; sequence YSPTSPAYSP…SPGYSPGSPA (168 aa). The 24; approximate repeat unit spans residues 1710 to 1716; sequence YSPGSPA. The span at 1720 to 1733 shows a compositional bias: basic and acidic residues; that stretch reads KQDEQKHNENENSR.

The protein belongs to the RNA polymerase beta' chain family. As to quaternary structure, component of the RNA polymerase II (Pol II) complex consisting of 12 subunits. Interacts with DEF1; the interaction is direct and serves to bridge RPB1 to the Elongin complex in a DNA-damaged dependent manner. Interacts with the Elongin subunit ELA1. Interacts with the Elongin subunit ELC1. Interacts with ASK10. Interacts with ESS1. Interacts with RTT103. Interacts with SHE2. Post-translationally, the tandem 7 residues repeats in the C-terminal domain (CTD) can be highly phosphorylated. The phosphorylation activates Pol II. Phosphorylation occurs mainly at residues 'Ser-2' and 'Ser-5' of the heptapeptide repeat. The phosphorylated form of Pol II appears to carry, on average, one phosphate per repeat. The phosphorylation state is believed to result from the balanced action of site-specific CTD kinases and phosphatases, and a 'CTD code' that specifies the position of Pol II within the transcription cycle has been proposed. Phosphorylation at 'Ser-5' occurs in promoter-proximal regions in early elongation. Phosphorylation at 'Ser-2' predominates in regions more distal to the promoter and triggers binding of the 3' RNA processing machinery. CTD kinases include KIN28 (as part of the TFKII complex, a subcomplex of the TFIIH holo complex), SSN3/SRB10 (as part of the SRB8-11 complex, a module of the Mediator complex), CTK1 (as part of CTD kinase), and probably BUR1 (as part of the BUR1-BUR2 kinase complex). Phosphatases include FCP1 and SSU72. Following transcription stress, the elongating form of RNA polymerase II (RNA pol IIo) is polyubiquitinated via 'Lys-63'-linkages on Lys-1246 by the RSP5-UBA1-UBC5 complex at DNA damage sites without leading to degradation: ubiquitination promotes RNA pol IIo backtracking to allow access by the transcription-coupled nucleotide excision repair (TC-NER) machinery. Subsequent DEF1-dependent polyubiquitination by the elongin complex via 'Lys-48'-linkages may lead to proteasome-mediated degradation; presumably at stalled RNA pol II where TC-NER has failed, to halt global transcription and enable 'last resort' DNA repair pathways.

Its subcellular location is the nucleus. It catalyses the reaction RNA(n) + a ribonucleoside 5'-triphosphate = RNA(n+1) + diphosphate. Functionally, DNA-dependent RNA polymerase catalyzes the transcription of DNA into RNA using the four ribonucleoside triphosphates as substrates. Largest and catalytic component of RNA polymerase II which synthesizes mRNA precursors and many functional non-coding RNAs. Forms the polymerase active center together with the second largest subunit. Pol II is the central component of the basal RNA polymerase II transcription machinery. During a transcription cycle, Pol II, general transcription factors and the Mediator complex assemble as the preinitiation complex (PIC) at the promoter. 11-15 base pairs of DNA surrounding the transcription start site are melted and the single-stranded DNA template strand of the promoter is positioned deeply within the central active site cleft of Pol II to form the open complex. After synthesis of about 30 bases of RNA, Pol II releases its contacts with the core promoter and the rest of the transcription machinery (promoter clearance) and enters the stage of transcription elongation in which it moves on the template as the transcript elongates. Pol II appears to oscillate between inactive and active conformations at each step of nucleotide addition. Elongation is influenced by the phosphorylation status of the C-terminal domain (CTD) of Pol II largest subunit (RPB1), which serves as a platform for assembly of factors that regulate transcription initiation, elongation, termination and mRNA processing. Pol II is composed of mobile elements that move relative to each other. The core element with the central large cleft comprises RPB3, RBP10, RPB11, RPB12 and regions of RPB1 and RPB2 forming the active center. The clamp element (portions of RPB1, RPB2 and RPB3) is connected to the core through a set of flexible switches and moves to open and close the cleft. A bridging helix emanates from RPB1 and crosses the cleft near the catalytic site and is thought to promote translocation of Pol II by acting as a ratchet that moves the RNA-DNA hybrid through the active site by switching from straight to bent conformations at each step of nucleotide addition. In elongating Pol II, the lid loop (RPB1) appears to act as a wedge to drive apart the DNA and RNA strands at the upstream end of the transcription bubble and guide the RNA strand toward the RNA exit groove located near the base of the largely unstructured CTD domain of RPB1. The rudder loop (RPB1) interacts with single-stranded DNA after separation from the RNA strand, likely preventing reassociation with the exiting RNA. The cleft is surrounded by jaws: an upper jaw formed by portions of RBP1, RPB2 and RPB9, and a lower jaw, formed by RPB5 and portions of RBP1. The jaws are thought to grab the incoming DNA template, mainly by RPB5 direct contacts to DNA. The chain is DNA-directed RNA polymerase II subunit RPB1 (RPO21) from Saccharomyces cerevisiae (strain ATCC 204508 / S288c) (Baker's yeast).